The sequence spans 288 residues: ATP synthase gamma chain (288 aa).

It belongs to the ATPase gamma chain family. F-type ATPases have 2 components, CF(1) - the catalytic core - and CF(0) - the membrane proton channel. CF(1) has five subunits: alpha(3), beta(3), gamma(1), delta(1), epsilon(1). CF(0) has three main subunits: a, b and c.

The protein localises to the cell inner membrane. Its function is as follows. Produces ATP from ADP in the presence of a proton gradient across the membrane. The gamma chain is believed to be important in regulating ATPase activity and the flow of protons through the CF(0) complex. This is ATP synthase gamma chain from Stutzerimonas stutzeri (strain A1501) (Pseudomonas stutzeri).